The chain runs to 146 residues: Large ribosomal subunit protein uL15 (146 aa).

The segment covering 1-10 (MTLKLHDLRP) has biased composition (basic and acidic residues). The disordered stretch occupies residues 1–41 (MTLKLHDLRPARGSKTARTRVGRGDGSKGKTAGRGTKGTRA).

The protein belongs to the universal ribosomal protein uL15 family. Part of the 50S ribosomal subunit.

In terms of biological role, binds to the 23S rRNA. The polypeptide is Large ribosomal subunit protein uL15 (Mycobacterium bovis (strain BCG / Pasteur 1173P2)).